Here is a 287-residue protein sequence, read N- to C-terminus: uncharacterized protein (287 aa).

The first 31 residues, Met-1–Val-31, serve as a signal peptide directing secretion.

This sequence belongs to the MG439/MG440 family.

This is an uncharacterized protein from Mycoplasma pneumoniae (strain ATCC 29342 / M129 / Subtype 1) (Mycoplasmoides pneumoniae).